The following is a 552-amino-acid chain: Serine protease 53 (552 aa).

Positions 1-23 (MRQSWRPELLIVGAVVVIEGLQA) are cleaved as a signal peptide. 2 consecutive Peptidase S1 domains span residues 24 to 273 (AQRA…AHVH) and 294 to 525 (VACG…NLDW). Positions 27 to 46 (ACGQRGPGPPEPQEGNTLPG) are disordered. Cys-62 and Cys-78 form a disulfide bridge. Catalysis depends on charge relay system residues His-77 and Asp-128. Intrachain disulfides connect Cys-158–Cys-230, Cys-187–Cys-209, Cys-220–Cys-249, and Cys-326–Cys-342. Residues Ser-224, His-341, and Asp-382 each act as charge relay system in the active site. 2 disulfide bridges follow: Cys-443-Cys-463 and Cys-473-Cys-501. Ser-477 acts as the Charge relay system in catalysis.

This sequence belongs to the peptidase S1 family.

It localises to the secreted. Its function is as follows. In vitro can degrade the fibrinogen alpha chain of as well as pro-urokinase-type plasminogen activator. The polypeptide is Serine protease 53 (Prss53) (Mus musculus (Mouse)).